The sequence spans 454 residues: uncharacterized protein (454 aa).

Belongs to the outer membrane factor (OMF) (TC 1.B.17) family.

This is an uncharacterized protein from Haemophilus influenzae (strain ATCC 51907 / DSM 11121 / KW20 / Rd).